The primary structure comprises 448 residues: Probable glycine dehydrogenase (decarboxylating) subunit 1 (448 aa).

Belongs to the GcvP family. N-terminal subunit subfamily. In terms of assembly, the glycine cleavage system is composed of four proteins: P, T, L and H. In this organism, the P 'protein' is a heterodimer of two subunits.

It carries out the reaction N(6)-[(R)-lipoyl]-L-lysyl-[glycine-cleavage complex H protein] + glycine + H(+) = N(6)-[(R)-S(8)-aminomethyldihydrolipoyl]-L-lysyl-[glycine-cleavage complex H protein] + CO2. The glycine cleavage system catalyzes the degradation of glycine. The P protein binds the alpha-amino group of glycine through its pyridoxal phosphate cofactor; CO(2) is released and the remaining methylamine moiety is then transferred to the lipoamide cofactor of the H protein. The chain is Probable glycine dehydrogenase (decarboxylating) subunit 1 from Listeria innocua serovar 6a (strain ATCC BAA-680 / CLIP 11262).